A 101-amino-acid chain; its full sequence is NADH-quinone oxidoreductase subunit K (101 aa).

A run of 3 helical transmembrane segments spans residues 4–24, 30–50, and 61–81; these read LAHF…GIFL, IVLL…FVAF, and VFVF…LAIL.

This sequence belongs to the complex I subunit 4L family. As to quaternary structure, NDH-1 is composed of 14 different subunits. Subunits NuoA, H, J, K, L, M, N constitute the membrane sector of the complex.

Its subcellular location is the cell inner membrane. It catalyses the reaction a quinone + NADH + 5 H(+)(in) = a quinol + NAD(+) + 4 H(+)(out). In terms of biological role, NDH-1 shuttles electrons from NADH, via FMN and iron-sulfur (Fe-S) centers, to quinones in the respiratory chain. The immediate electron acceptor for the enzyme in this species is believed to be ubiquinone. Couples the redox reaction to proton translocation (for every two electrons transferred, four hydrogen ions are translocated across the cytoplasmic membrane), and thus conserves the redox energy in a proton gradient. In Cupriavidus metallidurans (strain ATCC 43123 / DSM 2839 / NBRC 102507 / CH34) (Ralstonia metallidurans), this protein is NADH-quinone oxidoreductase subunit K.